A 92-amino-acid chain; its full sequence is Small ribosomal subunit protein uS19 (92 aa).

It belongs to the universal ribosomal protein uS19 family.

Its function is as follows. Protein S19 forms a complex with S13 that binds strongly to the 16S ribosomal RNA. The protein is Small ribosomal subunit protein uS19 of Shigella boydii serotype 18 (strain CDC 3083-94 / BS512).